Reading from the N-terminus, the 104-residue chain is uncharacterized protein (104 aa).

The disordered stretch occupies residues 55–104 (RPFSSDRINRPFSPDKKGEPIFPDKRDRPFSPDRINRPFSPDKKGEPIFP).

It localises to the plastid. This is an uncharacterized protein from Euglena longa (Euglenophycean alga).